Consider the following 137-residue polypeptide: Ribosomal RNA large subunit methyltransferase H (137 aa).

S-adenosyl-L-methionine contacts are provided by residues leucine 56, glycine 85, and 104–109; that span reads LSPLTL.

It belongs to the RNA methyltransferase RlmH family. In terms of assembly, homodimer.

It is found in the cytoplasm. It carries out the reaction pseudouridine(1915) in 23S rRNA + S-adenosyl-L-methionine = N(3)-methylpseudouridine(1915) in 23S rRNA + S-adenosyl-L-homocysteine + H(+). Specifically methylates the pseudouridine at position 1915 (m3Psi1915) in 23S rRNA. The sequence is that of Ribosomal RNA large subunit methyltransferase H from Thermus thermophilus (strain ATCC 27634 / DSM 579 / HB8).